The primary structure comprises 276 residues: Undecaprenyl-diphosphatase (276 aa).

A run of 8 helical transmembrane segments spans residues 1 to 21, 40 to 60, 93 to 113, 120 to 140, 154 to 174, 199 to 219, 227 to 247, and 255 to 275; these read MELY…FLPV, ALSF…LVFF, VRLA…GLIL, LFSS…FLWL, IGFG…IPGI, FLLS…ESFA, VTLL…VALL, and FYLF…AGFV.

This sequence belongs to the UppP family.

It localises to the cell inner membrane. The catalysed reaction is di-trans,octa-cis-undecaprenyl diphosphate + H2O = di-trans,octa-cis-undecaprenyl phosphate + phosphate + H(+). Functionally, catalyzes the dephosphorylation of undecaprenyl diphosphate (UPP). Confers resistance to bacitracin. The sequence is that of Undecaprenyl-diphosphatase from Desulforapulum autotrophicum (strain ATCC 43914 / DSM 3382 / VKM B-1955 / HRM2) (Desulfobacterium autotrophicum).